A 207-amino-acid polypeptide reads, in one-letter code: GTP cyclohydrolase 1 (207 aa).

Residues cysteine 88, histidine 91, and cysteine 162 each contribute to the Zn(2+) site.

It belongs to the GTP cyclohydrolase I family. Toroid-shaped homodecamer, composed of two pentamers of five dimers.

The enzyme catalyses GTP + H2O = 7,8-dihydroneopterin 3'-triphosphate + formate + H(+). Its pathway is cofactor biosynthesis; 7,8-dihydroneopterin triphosphate biosynthesis; 7,8-dihydroneopterin triphosphate from GTP: step 1/1. The chain is GTP cyclohydrolase 1 from Sulfurisphaera tokodaii (strain DSM 16993 / JCM 10545 / NBRC 100140 / 7) (Sulfolobus tokodaii).